The sequence spans 956 residues: Calsyntenin-3 (956 aa).

An N-terminal signal peptide occupies residues 1 to 19 (MTLLLVSLLLASLLQISSG). Residues 1-21 (MTLLLVSLLLASLLQISSGNK) lie on the Cytoplasmic side of the membrane. The Extracellular portion of the chain corresponds to 20-847 (NKANKHKPWI…SHRNSMVPSA (828 aa)). Residues 22 to 42 (ANKHKPWIEAEYQGIVMENDN) constitute an intramembrane region (helical). 2 consecutive Cadherin domains span residues 29 to 145 (IEAE…APVF) and 146 to 246 (VERL…KPSW). At 43-73 (TVLLNPPLFALDKDAPLRYAGEICGFRLHGS) the chain is on the cytoplasmic side. An intramembrane region (helical) is located at residues 74-94 (GVPFEAVILDKATGEGLIRAK). Residues 95–139 (EPVDCEAQKEHTFTIQAYDCGEGPDGTNTKKSHKATVHVRVNDVN) lie on the Cytoplasmic side of the membrane. An intramembrane region (helical) is located at residues 140-160 (EFAPVFVERLYRAAVTEGKLY). Over 161 to 248 (DRILRVEAID…KPTCKPSWQG (88 aa)) the chain is Cytoplasmic. A helical membrane pass occupies residues 249 to 269 (WNKRIEYAPGAGSLALFPGIR). Topologically, residues 270–357 (LETCDEPLWN…GTQAVQVPLG (88 aa)) are lumenal. N-linked (GlcNAc...) asparagine glycans are attached at residues asparagine 299, asparagine 327, asparagine 347, asparagine 507, and asparagine 740. Residues 848 to 868 (ATLIIVVCVGFLVLMVILGLV) form a helical membrane-spanning segment. At 869 to 956 (RIHSLHRRVS…RIIESPPHRY (88 aa)) the chain is on the cytoplasmic side. Positions 916–956 (QTCVAGVAGGQQEEEDSSDSEAADSPSSDERRIIESPPHRY) are disordered. The segment covering 927 to 937 (QEEEDSSDSEA) has biased composition (acidic residues). Basic and acidic residues predominate over residues 943–956 (SDERRIIESPPHRY).

It belongs to the calsyntenin family. Interacts (via cadherin domains) with both alpha and beta isoforms of neurexins (NRXN1, NRXN2 and NRXN3). Directly interacts with APBA2. Forms a tripartite complex with APBA2 and APP. Interacts with low affinity with KLC1. Interacts with SLC23A2/SVCT2. In terms of assembly, interacts with CIDEA; inhibiting the lipid transferase activity of CIDEA. Interacts with CIDEC; inhibiting the lipid transferase activity of CIDEC. In terms of processing, proteolytically processed under normal cellular conditions. A primary zeta-cleavage generates a large extracellular (soluble) N-terminal domain (sAlc) and a short C-terminal transmembrane fragment (CTF1). A secondary cleavage catalyzed by gamma-secretase within the transmembrane domain releases the beta-Alc-beta chain in the extracellular milieu and produces an intracellular fragment (AlcICD). This processing is strongly suppressed in the tripartite complex formed with APBA2 and APP, which seems to prevent the association with gamma-secretase. Post-translationally, ubiquitinated: endoplasmic reticulum-localized protein is ubiquitinated and degraded by the endoplasmic reticulum-associated degradation (ERAD) pathway. In terms of tissue distribution, restricted to the brain (at protein level). In the cerebral cortex, found in the somas and neuropil of all layers. Expressed at highest levels in neurons of cortical layer 5 and, at lower levels, in neurons of the upper layers. Highly expressed in Purkinje cells. Also found in a few scattered interneurons throughout the granule cell layer and occasionally in neurons in the molecular layer (at protein level). In all layers, high levels in a subpopulation of presumptive GABAergic neurons (based on morphology). Expression is restricted to adipose tissue, with high expression in thermogenic adipocytes (brown adipose tissue).

It localises to the postsynaptic cell membrane. It is found in the endoplasmic reticulum membrane. Its subcellular location is the golgi apparatus membrane. The protein localises to the cell projection. The protein resides in the dendrite. It localises to the lipid droplet. Its function is as follows. Postsynaptic adhesion molecule that binds to presynaptic neurexins to mediate both excitatory and inhibitory synapse formation. Promotes synapse development by acting as a cell adhesion molecule at the postsynaptic membrane, which associates with both neurexin-alpha and neurexin-beta proteins at the presynaptic membrane. Regulates the balance between excitatory and inhibitory synapses by inhibiting formation of excitatory parallel-fiber synapses and promoting formation of inhibitory synapses in the same neuron. May also be involved in ascorbate (vitamin C) uptake via its interaction with SLC23A2/SVCT2. Complex formation with APBA2 and APP, stabilizes APP metabolism and enhances APBA2-mediated suppression of beta-APP40 secretion, due to the retardation of intracellular APP maturation. Adipose-specific isoform that plays a key role in adaptive thermogenesis. Facilitates the efficient use of stored triglyceride by promoting multilocular morphology of thermogenic adipocytes: acts by inhibiting the activity of CIDEA and CIDEC on lipid droplets, thereby preventing lipid droplet fusion and facilitating lipid utilization. May also participate in adaptive thermogenesis by promoting sympathetic innervation of thermogenic adipose tissue: acts by driving secretion of neurotrophic factor S100B from brown adipocytes, stimulating neurite outgrowth from sympathetic neurons. The sequence is that of Calsyntenin-3 from Mus musculus (Mouse).